Here is an 88-residue protein sequence, read N- to C-terminus: MKKDIHPDYHPVVFQDAGTGHQFLTKSTATSDRTVAWEDGNEYPLIVVDVTSESHPFWTGAQRVMDTAGRVEKFNQRYGALARRKKNK.

The protein belongs to the bacterial ribosomal protein bL31 family. Type B subfamily. Part of the 50S ribosomal subunit.

This is Large ribosomal subunit protein bL31B from Corynebacterium diphtheriae (strain ATCC 700971 / NCTC 13129 / Biotype gravis).